Consider the following 1238-residue polypeptide: Anion exchange protein 2 (1238 aa).

The tract at residues 1 to 238 (MSGTPRRPAS…YNLQERRRIG (238 aa)) is disordered. At 1-704 (MSGTPRRPAS…SDFRDALDPQ (704 aa)) the chain is on the cytoplasmic side. Composition is skewed to basic and acidic residues over residues 37–49 (DLHRTLGVERFEE) and 58–75 (GGEELGRSYGEEDFEYHR). 2 stretches are compositionally biased toward basic residues: residues 76 to 85 (QSSHHIHHPL) and 94 to 110 (RRRKTPQGQVRKPRRRP). The segment covering 120 to 133 (TIEEGEEDEDETSE) has biased composition (acidic residues). Phosphoserine occurs at positions 132, 144, 170, and 172. A compositionally biased stretch (polar residues) spans 141–154 (TDPSPASTPTSVQF). The span at 205 to 215 (GTAGGDDGGAS) shows a compositional bias: gly residues. Serine 239 is modified (phosphoserine). Threonine 253 bears the Phosphothreonine mark. Lysine 270 carries the post-translational modification N6-methyllysine. Positions 277 to 315 (VPGVRRHLVRKNAKGSSQSSREGREPGPTPRTRPRAPHK) are disordered. Residues 280–289 (VRRHLVRKNA) show a composition bias toward basic residues. Serine 439 bears the Phosphoserine mark. A disordered region spans residues 445–466 (SLLGHHHTQGAESDPHVTEPLI). Helical transmembrane passes span 705–728 (CLAAVIFIYFAALSPAITFGGLLG), 734–771 (LIGVSELIMSTALQGVTFCLLGAQPLLVIGFSGPLLVF), 791–813 (VWIGFWLVLSALLMVALEGSFLV), and 823–844 (IFAFLISLIFIYETFYKLVKIF). Residues 705-1238 (CLAAVIFIYF…DEYNEMPMPV (534 aa)) are membrane (anion exchange). Topologically, residues 845-897 (QEHPLHGCLASNSSEADGGKNTTWTEAAPTPGHGNTSSAEQAGVERPQGQPNT) are extracellular. N-linked (GlcNAc...) asparagine glycans are attached at residues asparagine 856, asparagine 865, and asparagine 879. Residues 858–869 (SEADGGKNTTWT) are compositionally biased toward polar residues. The interval 858–892 (SEADGGKNTTWTEAAPTPGHGNTSSAEQAGVERPQ) is disordered. Residues 898-915 (ALLSLVLMAGTFFIAFFL) traverse the membrane as a helical segment. Residues 916 to 930 (RKFKNSRFFPGRIRR) lie on the Cytoplasmic side of the membrane. 5 helical membrane passes run 931 to 951 (VIGDFGVPIAILIMVLVDYSI), 985 to 1007 (PFPVWMMVASLLPAILVFILIFM), 1033 to 1054 (LLLIVAMGGICALFGLLWLAAA), 1088 to 1133 (VTGL…IQFY), and 1160 to 1196 (MHLFKALQLLCLALLWAVMSTAASLAFPFILILTVPL). Cysteine 1170 carries S-palmitoyl cysteine lipidation.

It belongs to the anion exchanger (TC 2.A.31) family. Expressed in the cochlea (at protein level).

The protein localises to the apical cell membrane. The protein resides in the basolateral cell membrane. The enzyme catalyses hydrogencarbonate(in) + chloride(out) = hydrogencarbonate(out) + chloride(in). Sodium-independent anion exchanger which mediates the electroneutral exchange of chloride for bicarbonate ions across the cell membrane. Plays an important role in osteoclast differentiation and function. Regulates bone resorption and calpain-dependent actin cytoskeleton organization in osteoclasts via anion exchange-dependent control of pH. Essential for intracellular pH regulation in CD8(+) T-cells upon CD3 stimulation, modulating CD8(+) T-cell response. This chain is Anion exchange protein 2 (SLC4A2), found in Cavia porcellus (Guinea pig).